We begin with the raw amino-acid sequence, 664 residues long: Acetylcholinesterase (664 aa).

A signal peptide spans 1–29 (MFVNQRTRRPYMSVFVLVLGAAVICPAYG). Residues C95 and C122 are joined by a disulfide bond. N117 carries an N-linked (GlcNAc...) asparagine glycan. The active-site Acyl-ester intermediate is S261. A disulfide bridge links C315 with C330. N-linked (GlcNAc...) asparagine glycosylation is present at N316. Residues E390 and H504 each act as charge relay system in the active site. C466 and C588 are disulfide-bonded. N517 carries N-linked (GlcNAc...) asparagine glycosylation. The GPI-anchor amidated asparagine moiety is linked to residue N647. Residues 648 to 664 (KTPPHPQVILETRAFMH) constitute a propeptide, removed in mature form.

Belongs to the type-B carboxylesterase/lipase family. As to quaternary structure, homodimer; disulfide-linked.

It is found in the synapse. The protein localises to the cell membrane. It catalyses the reaction acetylcholine + H2O = choline + acetate + H(+). In terms of biological role, rapidly hydrolyzes choline released into the synapse. It can hydrolyze butyrylthiocholine. The sequence is that of Acetylcholinesterase from Anopheles stephensi (Indo-Pakistan malaria mosquito).